We begin with the raw amino-acid sequence, 228 residues long: Archaeal flagellar ATP-binding protein FlaH (228 aa).

Residues Gly-30, Thr-31, Lys-33, Ser-34, Val-35, Glu-57, and Lys-191 each coordinate ATP. Residue Ser-34 coordinates Mg(2+). Mg(2+) is bound at residue Glu-57.

The protein belongs to the FlaH family. As to quaternary structure, the S.acidocaldarius archaellum assembly machinery and its filament consist of seven proteins (FlaB, FlaF, FlaG, FlaH, FlaI, FlaJ and FlaX). Interacts directly with the FlaX ring and the motor ATPase FlaI. Monomers, which can probably form homohexamers upon binding to ATP. In vitro, FlaH assembles as a second ring inside the FlaX ring.

The protein resides in the archaeal flagellum. It is found in the cytoplasm. Component of the archaellum. FlaX, FlaH and FlaI form the core cytoplasmic motor complex of the crenarchaeal archaellum. FlaH binds ATP with high affinity but lacks detectable in vitro ATPase activity. ATP binding is essential for interaction with FlaI and for archaellum assembly. This Sulfolobus acidocaldarius (strain ATCC 33909 / DSM 639 / JCM 8929 / NBRC 15157 / NCIMB 11770) protein is Archaeal flagellar ATP-binding protein FlaH.